The following is a 65-amino-acid chain: Alpha-conotoxine-like Am1.5 (65 aa).

The signal sequence occupies residues 1-21 (MGMRMMFTVFLLVVLATTVVS). Residues 22–46 (FMSGRAFRDRNAAAKVSDLIALKAR) constitute a propeptide that is removed on maturation. E49 bears the 4-carboxyglutamate mark. The interval 52 to 54 (SHP) is ser-Xaa-Pro motif, crucial for potent interaction with nAChR. 4-hydroxyproline occurs at positions 54 and 61. E62 carries the post-translational modification 4-carboxyglutamate.

This sequence belongs to the conotoxin A superfamily. Post-translationally, contains 2 disulfide bonds. In terms of tissue distribution, expressed by the venom duct.

It localises to the secreted. Alpha-conotoxins act on postsynaptic membranes, they bind to the nicotinic acetylcholine receptors (nAChR) and thus inhibit them. This chain is Alpha-conotoxine-like Am1.5, found in Conus amadis (Amadis cone).